Reading from the N-terminus, the 352-residue chain is Ferredoxin--NADP reductase 2 (352 aa).

The FAD site is built by E36, K44, Y48, I88, L123, D290, and S331.

Belongs to the ferredoxin--NADP reductase type 2 family. As to quaternary structure, homodimer. FAD is required as a cofactor.

It catalyses the reaction 2 reduced [2Fe-2S]-[ferredoxin] + NADP(+) + H(+) = 2 oxidized [2Fe-2S]-[ferredoxin] + NADPH. The polypeptide is Ferredoxin--NADP reductase 2 (Exiguobacterium sibiricum (strain DSM 17290 / CCUG 55495 / CIP 109462 / JCM 13490 / 255-15)).